A 375-amino-acid polypeptide reads, in one-letter code: Fluoride export protein 1 (375 aa).

Topologically, residues 1–11 are cytoplasmic; the sequence is MIFNPVISNHK. The helical transmembrane segment at 12-32 threads the bilayer; that stretch reads LSHYIHVFCTFTTFCILGTET. The Extracellular portion of the chain corresponds to 33–34; it reads RQ. Residues 35–55 form a helical membrane-spanning segment; that stretch reads AITALSTYTPAFVTAPTVLWS. At 56–79 the chain is on the cytoplasmic side; sequence NCSSCMLMGIMQSLNAYTWMKDHQ. A helical membrane pass occupies residues 80–100; sequence VLFLGVTTGYCGALSSFSSML. Over 101 to 127 the chain is Extracellular; it reads LEMFEHSTNLTNGNIANHTKLPNRAYG. 2 N-linked (GlcNAc...) asparagine glycosylation sites follow: Asn-109 and Asn-117. Residues 128–148 form a helical membrane-spanning segment; sequence IMEFLSVLLVHLMVSMGSLIF. Over 149-213 the chain is Cytoplasmic; that stretch reads GRQLGKEVIV…FKKFFDIVDK (65 aa). The helical transmembrane segment at 214 to 234 threads the bilayer; sequence LAYALAFPLIILFVVLCAYYE. The N-linked (GlcNAc...) asparagine glycan is linked to Asn-235. Over 235–241 the chain is Extracellular; sequence NYSRGKW. Residues 242 to 262 traverse the membrane as a helical segment; that stretch reads TLPCLFGIFAGFLRYWLAEMF. At 263–268 the chain is on the cytoplasmic side; it reads NKTNKK. Residues 269 to 289 form a helical membrane-spanning segment; the sequence is FPLGTFLANVFATLLIGIFTM. At 290–310 the chain is on the extracellular side; that stretch reads VQRGKKHFSTDVPIVNSLNSC. Residues 311–331 traverse the membrane as a helical segment; it reads HIVSALISGFCGTLSTISTFI. The Cytoplasmic portion of the chain corresponds to 332-338; that stretch reads NEGYKLS. The chain crosses the membrane as a helical span at residues 339 to 359; it reads FINMLIYYTVSIAISYCLLVI. At 360–375 the chain is on the extracellular side; it reads TLGSYAWTRGLTNPIC.

This sequence belongs to the fluoride channel Fluc/FEX (TC 1.A.43) family.

The protein localises to the cell membrane. The catalysed reaction is fluoride(in) = fluoride(out). In terms of biological role, fluoride channel required for the rapid expulsion of cytoplasmic fluoride. This Saccharomyces cerevisiae (strain ATCC 204508 / S288c) (Baker's yeast) protein is Fluoride export protein 1.